The chain runs to 117 residues: Pterin-4-alpha-carbinolamine dehydratase 2 (117 aa).

N6-acetyllysine; alternate occurs at positions 101, 105, and 112. N6-succinyllysine; alternate is present on residues K101, K105, and K112.

The protein belongs to the pterin-4-alpha-carbinolamine dehydratase family. In terms of assembly, homotetramer. Interacts with DYRK1B.

The catalysed reaction is (4aS,6R)-4a-hydroxy-L-erythro-5,6,7,8-tetrahydrobiopterin = (6R)-L-erythro-6,7-dihydrobiopterin + H2O. Functionally, involved in tetrahydrobiopterin biosynthesis. Seems to both prevent the formation of 7-pterins and accelerate the formation of quinonoid-BH2. Regulates the dimerization of homeodomain protein HNF-1-alpha and enhances its transcriptional activity. This Pongo abelii (Sumatran orangutan) protein is Pterin-4-alpha-carbinolamine dehydratase 2 (PCBD2).